The primary structure comprises 160 residues: Transcription elongation factor GreA (160 aa).

Residues 49–75 (SEYDEAKNDQAFTEGKILQLENKLKNA) are a coiled coil.

The protein belongs to the GreA/GreB family.

Necessary for efficient RNA polymerase transcription elongation past template-encoded arresting sites. The arresting sites in DNA have the property of trapping a certain fraction of elongating RNA polymerases that pass through, resulting in locked ternary complexes. Cleavage of the nascent transcript by cleavage factors such as GreA or GreB allows the resumption of elongation from the new 3'terminus. GreA releases sequences of 2 to 3 nucleotides. In Clostridium botulinum (strain Alaska E43 / Type E3), this protein is Transcription elongation factor GreA.